An 89-amino-acid chain; its full sequence is Small ribosomal subunit protein uS15 (89 aa).

Belongs to the universal ribosomal protein uS15 family. In terms of assembly, part of the 30S ribosomal subunit. Forms a bridge to the 50S subunit in the 70S ribosome, contacting the 23S rRNA.

Its function is as follows. One of the primary rRNA binding proteins, it binds directly to 16S rRNA where it helps nucleate assembly of the platform of the 30S subunit by binding and bridging several RNA helices of the 16S rRNA. Functionally, forms an intersubunit bridge (bridge B4) with the 23S rRNA of the 50S subunit in the ribosome. In Thermus thermophilus (strain ATCC BAA-163 / DSM 7039 / HB27), this protein is Small ribosomal subunit protein uS15.